Reading from the N-terminus, the 139-residue chain is Nuclear transcription factor Y subunit B-4 (139 aa).

Residues Leu8 to Gly14 mediate DNA binding. The interval Val35–Val46 is subunit association domain (SAD). Residues Tyr90 to Thr115 are compositionally biased toward basic and acidic residues. Positions Tyr90–Arg139 are disordered. A compositionally biased stretch (polar residues) spans Arg116–Lys125.

The protein belongs to the NFYB/HAP3 subunit family. As to quaternary structure, heterotrimeric transcription factor composed of three components, NF-YA, NF-YB and NF-YC. NF-YB and NF-YC must interact and dimerize for NF-YA association and DNA binding. Expressed in flowers, siliques and young rosettes.

Its subcellular location is the nucleus. Component of the NF-Y/HAP transcription factor complex. The NF-Y complex stimulates the transcription of various genes by recognizing and binding to a CCAAT motif in promoters. The chain is Nuclear transcription factor Y subunit B-4 (NFYB4) from Arabidopsis thaliana (Mouse-ear cress).